The following is a 37-amino-acid chain: Alpha-conotoxin-like Kn1.2 (37 aa).

The span at 1 to 15 (ESDGAHAKARADKPA) shows a compositional bias: basic and acidic residues. Residues 1-22 (ESDGAHAKARADKPARSATNRQ) constitute a propeptide that is removed on maturation. The tract at residues 1–23 (ESDGAHAKARADKPARSATNRQP) is disordered. Disulfide bonds link cysteine 25-cysteine 31 and cysteine 26-cysteine 36. The residue at position 36 (cysteine 36) is a Cysteine amide.

It belongs to the conotoxin A superfamily. In terms of tissue distribution, expressed by the venom duct.

The protein localises to the secreted. In terms of biological role, alpha-conotoxins act on postsynaptic membranes, they bind to the nicotinic acetylcholine receptors (nAChR) and thus inhibit them. This toxin inhibits high voltage-activated (HVA) calcium channel currents in rat DRG neurons (13% inhibition at 1 uM toxin) probably by activating GABA(B) receptors (GABBR1 and/or GABBR2). The chain is Alpha-conotoxin-like Kn1.2 from Conus kinoshitai (Kinoshita's cone).